Reading from the N-terminus, the 274-residue chain is MPFRSNNPITRDELLSRFFPQFHPVTTFNSGLSGGSFLIEHQGQRFVVRQPHDPDAPQSAFLRQYRALSQLPASIAPKPHLYLRDWMVVDYLPGAVKTYLPDTNELAGLLYYLHQQPRFGWRITLLPLLELYWQQSDPARRTVGWLRMLKRLRKAREPRPLRLSPLHMDVHAGNLVHSASGLKLIDWEYAGDGDIALELAAVWVENTEQHRQLVNDYATRAKIYPAQLWRQVRRWFPWLLMLKAGWFEYRWRQIGDQQFIRLADDTWRQLLIKQ.

It belongs to the thiamine kinase family.

The enzyme catalyses thiamine + ATP = thiamine phosphate + ADP + H(+). Its pathway is cofactor biosynthesis; thiamine diphosphate biosynthesis; thiamine phosphate from thiamine: step 1/1. In terms of biological role, catalyzes the ATP-dependent phosphorylation of thiamine to thiamine phosphate. Is involved in thiamine salvage. The protein is Thiamine kinase of Shigella sonnei (strain Ss046).